We begin with the raw amino-acid sequence, 219 residues long: 7-cyano-7-deazaguanine synthase (219 aa).

10 to 20 contacts ATP; it reads FSGGQDSTTCL. Positions 188, 197, 200, and 203 each coordinate Zn(2+).

This sequence belongs to the QueC family. As to quaternary structure, homodimer. Zn(2+) serves as cofactor.

It carries out the reaction 7-carboxy-7-deazaguanine + NH4(+) + ATP = 7-cyano-7-deazaguanine + ADP + phosphate + H2O + H(+). It functions in the pathway purine metabolism; 7-cyano-7-deazaguanine biosynthesis. Functionally, catalyzes the ATP-dependent conversion of 7-carboxy-7-deazaguanine (CDG) to 7-cyano-7-deazaguanine (preQ(0)). This is 7-cyano-7-deazaguanine synthase from Clostridium botulinum (strain Kyoto / Type A2).